Reading from the N-terminus, the 479-residue chain is ATP synthase subunit beta (479 aa).

153–160 (GGAGVGKT) lines the ATP pocket.

This sequence belongs to the ATPase alpha/beta chains family. In terms of assembly, F-type ATPases have 2 components, CF(1) - the catalytic core - and CF(0) - the membrane proton channel. CF(1) has five subunits: alpha(3), beta(3), gamma(1), delta(1), epsilon(1). CF(0) has three main subunits: a(1), b(2) and c(9-12). The alpha and beta chains form an alternating ring which encloses part of the gamma chain. CF(1) is attached to CF(0) by a central stalk formed by the gamma and epsilon chains, while a peripheral stalk is formed by the delta and b chains.

It is found in the cell membrane. The enzyme catalyses ATP + H2O + 4 H(+)(in) = ADP + phosphate + 5 H(+)(out). Its function is as follows. Produces ATP from ADP in the presence of a proton gradient across the membrane. The catalytic sites are hosted primarily by the beta subunits. The polypeptide is ATP synthase subunit beta (Lactobacillus delbrueckii subsp. bulgaricus (strain ATCC 11842 / DSM 20081 / BCRC 10696 / JCM 1002 / NBRC 13953 / NCIMB 11778 / NCTC 12712 / WDCM 00102 / Lb 14)).